A 335-amino-acid chain; its full sequence is Glycerol-3-phosphate dehydrogenase [NAD(P)+] (335 aa).

Serine 10, phenylalanine 11, arginine 31, and lysine 105 together coordinate NADPH. The sn-glycerol 3-phosphate site is built by lysine 105, glycine 136, and serine 138. An NADPH-binding site is contributed by alanine 140. Lysine 191, aspartate 244, serine 254, arginine 255, and asparagine 256 together coordinate sn-glycerol 3-phosphate. Lysine 191 functions as the Proton acceptor in the catalytic mechanism. Arginine 255 provides a ligand contact to NADPH. Valine 279 and glutamate 281 together coordinate NADPH.

Belongs to the NAD-dependent glycerol-3-phosphate dehydrogenase family.

The protein localises to the cytoplasm. The catalysed reaction is sn-glycerol 3-phosphate + NAD(+) = dihydroxyacetone phosphate + NADH + H(+). The enzyme catalyses sn-glycerol 3-phosphate + NADP(+) = dihydroxyacetone phosphate + NADPH + H(+). It participates in membrane lipid metabolism; glycerophospholipid metabolism. Its function is as follows. Catalyzes the reduction of the glycolytic intermediate dihydroxyacetone phosphate (DHAP) to sn-glycerol 3-phosphate (G3P), the key precursor for phospholipid synthesis. In Leptospira interrogans serogroup Icterohaemorrhagiae serovar Lai (strain 56601), this protein is Glycerol-3-phosphate dehydrogenase [NAD(P)+].